The chain runs to 113 residues: Prefoldin subunit beta (113 aa).

This sequence belongs to the prefoldin subunit beta family. In terms of assembly, heterohexamer of two alpha and four beta subunits.

The protein resides in the cytoplasm. Its function is as follows. Molecular chaperone capable of stabilizing a range of proteins. Seems to fulfill an ATP-independent, HSP70-like function in archaeal de novo protein folding. This chain is Prefoldin subunit beta, found in Methanococcus maripaludis (strain DSM 14266 / JCM 13030 / NBRC 101832 / S2 / LL).